Here is a 103-residue protein sequence, read N- to C-terminus: Large ribosomal subunit protein P1 (103 aa).

The segment at 66–103 (PAAGAPAAGAAGGAVEEKKEEKKAESEDESDDDMGLFD) is disordered. Positions 80–90 (VEEKKEEKKAE) are enriched in basic and acidic residues. Acidic residues predominate over residues 91 to 103 (SEDESDDDMGLFD).

This sequence belongs to the eukaryotic ribosomal protein P1/P2 family. P1 and P2 exist as dimers at the large ribosomal subunit.

Plays an important role in the elongation step of protein synthesis. The sequence is that of Large ribosomal subunit protein P1 from Polyorchis penicillatus (Hydromedusa).